The sequence spans 291 residues: Elongation factor Ts (291 aa).

Residues 79–82 are involved in Mg(2+) ion dislocation from EF-Tu; the sequence is TDFV.

The protein belongs to the EF-Ts family.

Its subcellular location is the cytoplasm. Associates with the EF-Tu.GDP complex and induces the exchange of GDP to GTP. It remains bound to the aminoacyl-tRNA.EF-Tu.GTP complex up to the GTP hydrolysis stage on the ribosome. This chain is Elongation factor Ts, found in Ruegeria pomeroyi (strain ATCC 700808 / DSM 15171 / DSS-3) (Silicibacter pomeroyi).